We begin with the raw amino-acid sequence, 746 residues long: Ferric enterobactin receptor (746 aa).

The N-terminal stretch at 1-25 (MSSRALPAVPFLLLSSCLLANAVHA) is a signal peptide. The TonB box signature appears at 39–44 (QTVVAT). Residues 47–174 (EETKQAPGVS…AGGVVNIITK (128 aa)) form the TBDR plug domain. Disordered stretches follow at residues 82-102 (VNLT…IDIR), 235-254 (GHES…GREG), and 397-424 (QKLD…KNRS). Over residues 84–98 (LTGNSSSGQRGNNRQ) the composition is skewed to polar residues. The TBDR beta-barrel domain maps to 179–746 (ETHGNLSVYS…TFYTSLTASF (568 aa)). The segment covering 402 to 411 (PSSNTQNTEE) has biased composition (polar residues). Positions 729–746 (ATYNEPGRTFYTSLTASF) match the TonB C-terminal box motif.

Belongs to the TonB-dependent receptor family.

The protein resides in the cell outer membrane. In terms of biological role, specific receptor for the siderophore ferric enterobactin. This Pseudomonas aeruginosa (strain ATCC 15692 / DSM 22644 / CIP 104116 / JCM 14847 / LMG 12228 / 1C / PRS 101 / PAO1) protein is Ferric enterobactin receptor (pfeA).